Consider the following 692-residue polypeptide: Elongation factor G (692 aa).

Positions 8–282 constitute a tr-type G domain; sequence ENTRNIGIMA…AVIDYLPSPL (275 aa). GTP is bound by residues 17 to 24, 81 to 85, and 135 to 138; these read AHIDAGKT, DTPGH, and NKMD.

It belongs to the TRAFAC class translation factor GTPase superfamily. Classic translation factor GTPase family. EF-G/EF-2 subfamily.

Its subcellular location is the cytoplasm. In terms of biological role, catalyzes the GTP-dependent ribosomal translocation step during translation elongation. During this step, the ribosome changes from the pre-translocational (PRE) to the post-translocational (POST) state as the newly formed A-site-bound peptidyl-tRNA and P-site-bound deacylated tRNA move to the P and E sites, respectively. Catalyzes the coordinated movement of the two tRNA molecules, the mRNA and conformational changes in the ribosome. The polypeptide is Elongation factor G (Bacillus cytotoxicus (strain DSM 22905 / CIP 110041 / 391-98 / NVH 391-98)).